We begin with the raw amino-acid sequence, 248 residues long: tRNA (guanine-N(1)-)-methyltransferase (248 aa).

Residues Gly113 and 133 to 138 contribute to the S-adenosyl-L-methionine site; that span reads IGDYVL.

Belongs to the RNA methyltransferase TrmD family. As to quaternary structure, homodimer.

It is found in the cytoplasm. The catalysed reaction is guanosine(37) in tRNA + S-adenosyl-L-methionine = N(1)-methylguanosine(37) in tRNA + S-adenosyl-L-homocysteine + H(+). Functionally, specifically methylates guanosine-37 in various tRNAs. The chain is tRNA (guanine-N(1)-)-methyltransferase from Shewanella piezotolerans (strain WP3 / JCM 13877).